The chain runs to 91 residues: Pyruvate kinase (91 aa).

R48 contacts substrate. K(+) contacts are provided by N50, S52, D82, and T83. Position 50–53 (50–53 (NFSH)) interacts with ATP. Residue R89 coordinates ATP.

The protein belongs to the pyruvate kinase family. In terms of assembly, homotetramer. It depends on Mg(2+) as a cofactor. K(+) is required as a cofactor.

It catalyses the reaction pyruvate + ATP = phosphoenolpyruvate + ADP + H(+). It functions in the pathway carbohydrate degradation; glycolysis; pyruvate from D-glyceraldehyde 3-phosphate: step 5/5. The sequence is that of Pyruvate kinase from Leishmania braziliensis.